A 160-amino-acid chain; its full sequence is MAEKQRGPNRLAKVSLDEASIARGNPDQEHERAIALFDILEDNSFTIPGREGPYALTLGLVENKLSFAIATVDGEPVMTHLLSLTPFRRVIRDYEMICESYYNAIRTASPSQIEAIDMGRRGLHNEASETLKQRLEGKVDLDHDTARRLFTLIFALHWKG.

Belongs to the UPF0262 family.

This chain is UPF0262 protein Mrad2831_3513, found in Methylobacterium radiotolerans (strain ATCC 27329 / DSM 1819 / JCM 2831 / NBRC 15690 / NCIMB 10815 / 0-1).